A 317-amino-acid polypeptide reads, in one-letter code: Beta-ketoacyl-[acyl-carrier-protein] synthase III (317 aa).

Residues Cys112 and His244 contribute to the active site. The segment at 245–249 (QANIR) is ACP-binding. Asn274 is an active-site residue.

It belongs to the thiolase-like superfamily. FabH family. Homodimer.

Its subcellular location is the cytoplasm. The enzyme catalyses malonyl-[ACP] + acetyl-CoA + H(+) = 3-oxobutanoyl-[ACP] + CO2 + CoA. The protein operates within lipid metabolism; fatty acid biosynthesis. Catalyzes the condensation reaction of fatty acid synthesis by the addition to an acyl acceptor of two carbons from malonyl-ACP. Catalyzes the first condensation reaction which initiates fatty acid synthesis and may therefore play a role in governing the total rate of fatty acid production. Possesses both acetoacetyl-ACP synthase and acetyl transacylase activities. Its substrate specificity determines the biosynthesis of branched-chain and/or straight-chain of fatty acids. The protein is Beta-ketoacyl-[acyl-carrier-protein] synthase III of Rickettsia prowazekii (strain Madrid E).